The chain runs to 298 residues: Small ribosomal subunit biogenesis GTPase RsgA (298 aa).

The CP-type G domain occupies 67–228; that stretch reads TNELVRPPIS…IADTPGFSSL (162 aa). Residues 116–119 and 171–179 each bind GTP; these read TKMD and GQSGVGKSS. Residues Cys252, Cys257, His259, and Cys265 each contribute to the Zn(2+) site.

This sequence belongs to the TRAFAC class YlqF/YawG GTPase family. RsgA subfamily. In terms of assembly, monomer. Associates with 30S ribosomal subunit, binds 16S rRNA. Zn(2+) serves as cofactor.

The protein resides in the cytoplasm. One of several proteins that assist in the late maturation steps of the functional core of the 30S ribosomal subunit. Helps release RbfA from mature subunits. May play a role in the assembly of ribosomal proteins into the subunit. Circularly permuted GTPase that catalyzes slow GTP hydrolysis, GTPase activity is stimulated by the 30S ribosomal subunit. This Bacillus pumilus (strain SAFR-032) protein is Small ribosomal subunit biogenesis GTPase RsgA.